A 468-amino-acid chain; its full sequence is RUS family member 1 (468 aa).

Position 2 is an N-acetylalanine (alanine 2). At threonine 49 the chain carries Phosphothreonine. The helical transmembrane segment at leucine 247–leucine 267 threads the bilayer.

It belongs to the RUS1 family.

It localises to the membrane. The protein is RUS family member 1 of Homo sapiens (Human).